A 478-amino-acid polypeptide reads, in one-letter code: Sugar transporter ERD6-like 15 (478 aa).

The next 12 helical transmembrane spans lie at phenylalanine 31–tyrosine 51, isoleucine 67–isoleucine 87, isoleucine 106–leucine 126, leucine 129–isoleucine 149, phenylalanine 161–alanine 181, leucine 185–glutamate 205, alanine 267–glycine 287, phenylalanine 305–valine 325, leucine 333–phenylalanine 353, valine 366–isoleucine 386, methionine 406–leucine 426, and glycine 432–valine 452.

This sequence belongs to the major facilitator superfamily. Sugar transporter (TC 2.A.1.1) family.

It localises to the membrane. Its function is as follows. Sugar transporter. In Arabidopsis thaliana (Mouse-ear cress), this protein is Sugar transporter ERD6-like 15.